Here is a 359-residue protein sequence, read N- to C-terminus: Photosystem II protein D1 2 (359 aa).

The next 3 helical transmembrane spans lie at 29–46, 118–133, and 142–156; these read YVGW…AATT, HFLI…EWEL, and WICV…AASA. Residue H118 participates in chlorophyll a binding. A pheophytin a-binding site is contributed by Y126. 2 residues coordinate [CaMn4O5] cluster: D170 and E189. The chain crosses the membrane as a helical span at residues 197 to 218; the sequence is FHMLGVAGVFGGSLFSAMHGSL. H198 contributes to the chlorophyll a binding site. A quinone contacts are provided by residues H215 and 264–265; that span reads SF. A Fe cation-binding site is contributed by H215. Fe cation is bound at residue H272. The helical transmembrane segment at 274 to 288 threads the bilayer; sequence FLAAWPVVGIWFTAL. Residues H332, E333, D342, and A344 each contribute to the [CaMn4O5] cluster site. The propeptide occupies 345 to 359; sequence AAESTPVALQAPAIG.

The protein belongs to the reaction center PufL/M/PsbA/D family. PSII is composed of 1 copy each of membrane proteins PsbA, PsbB, PsbC, PsbD, PsbE, PsbF, PsbH, PsbI, PsbJ, PsbK, PsbL, PsbM, PsbT, PsbX, PsbY, PsbZ, Psb30/Ycf12, peripheral proteins PsbO, CyanoQ (PsbQ), PsbU, PsbV and a large number of cofactors. It forms dimeric complexes. The D1/D2 heterodimer binds P680, chlorophylls that are the primary electron donor of PSII, and subsequent electron acceptors. It shares a non-heme iron and each subunit binds pheophytin, quinone, additional chlorophylls, carotenoids and lipids. D1 provides most of the ligands for the Mn4-Ca-O5 cluster of the oxygen-evolving complex (OEC). There is also a Cl(-1) ion associated with D1 and D2, which is required for oxygen evolution. The PSII complex binds additional chlorophylls, carotenoids and specific lipids. is required as a cofactor. Tyr-161 forms a radical intermediate that is referred to as redox-active TyrZ, YZ or Y-Z. In terms of processing, C-terminally processed by CtpA; processing is essential to allow assembly of the oxygen-evolving complex and thus photosynthetic growth.

It localises to the cellular thylakoid membrane. It carries out the reaction 2 a plastoquinone + 4 hnu + 2 H2O = 2 a plastoquinol + O2. Functionally, photosystem II (PSII) is a light-driven water:plastoquinone oxidoreductase that uses light energy to abstract electrons from H(2)O, generating O(2) and a proton gradient subsequently used for ATP formation. It consists of a core antenna complex that captures photons, and an electron transfer chain that converts photonic excitation into a charge separation. The D1/D2 (PsbA/PsbD) reaction center heterodimer binds P680, the primary electron donor of PSII as well as several subsequent electron acceptors. The protein is Photosystem II protein D1 2 of Synechococcus sp. (strain CC9311).